Consider the following 562-residue polypeptide: NAD-dependent malic enzyme (562 aa).

Tyr-101 serves as the catalytic Proton donor. Arg-154 serves as a coordination point for NAD(+). The active-site Proton acceptor is Lys-172. A divalent metal cation is bound by residues Glu-243, Asp-244, and Asp-267. NAD(+) contacts are provided by Asp-267 and Asn-415.

The protein belongs to the malic enzymes family. As to quaternary structure, homotetramer. The cofactor is Mg(2+). Requires Mn(2+) as cofactor.

It carries out the reaction (S)-malate + NAD(+) = pyruvate + CO2 + NADH. It catalyses the reaction oxaloacetate + H(+) = pyruvate + CO2. This is NAD-dependent malic enzyme from Shewanella sp. (strain ANA-3).